A 132-amino-acid polypeptide reads, in one-letter code: Large ribosomal subunit protein bL17 (132 aa).

This sequence belongs to the bacterial ribosomal protein bL17 family. In terms of assembly, part of the 50S ribosomal subunit. Contacts protein L32.

The protein is Large ribosomal subunit protein bL17 of Leptothrix cholodnii (strain ATCC 51168 / LMG 8142 / SP-6) (Leptothrix discophora (strain SP-6)).